Reading from the N-terminus, the 549-residue chain is Glucose-6-phosphate isomerase (549 aa).

Catalysis depends on E355, which acts as the Proton donor. Catalysis depends on residues H386 and K514.

Belongs to the GPI family.

Its subcellular location is the cytoplasm. The catalysed reaction is alpha-D-glucose 6-phosphate = beta-D-fructose 6-phosphate. The protein operates within carbohydrate biosynthesis; gluconeogenesis. Its pathway is carbohydrate degradation; glycolysis; D-glyceraldehyde 3-phosphate and glycerone phosphate from D-glucose: step 2/4. Catalyzes the reversible isomerization of glucose-6-phosphate to fructose-6-phosphate. The chain is Glucose-6-phosphate isomerase from Salmonella schwarzengrund (strain CVM19633).